The following is a 220-amino-acid chain: PRA1 family protein B4 (220 aa).

Residues Met1 to Ser27 are disordered. Over residues Ser12–Ser27 the composition is skewed to polar residues. 5 helical membrane passes run Tyr83–Val103, His105–Phe125, Gly146–Val166, Met170–Leu190, and Ala196–Ile216.

This sequence belongs to the PRA1 family. In terms of assembly, interacts with PRA1B1, PRA1B2, PRA1B3, PRA1B5, PRA1B6 and PRA1E. As to expression, expressed in roots, lateral roots, lateral root caps, stomata and trichomes.

The protein localises to the endosome membrane. Its function is as follows. May be involved in both secretory and endocytic intracellular trafficking in the endosomal/prevacuolar compartments. The polypeptide is PRA1 family protein B4 (PRA1B4) (Arabidopsis thaliana (Mouse-ear cress)).